We begin with the raw amino-acid sequence, 25 residues long: Caerin-1.6 (25 aa).

A Leucine amide modification is found at Leu25.

This sequence belongs to the frog skin active peptide (FSAP) family. Caerin subfamily. In terms of tissue distribution, expressed by the skin dorsal glands.

It localises to the secreted. Antimicrobial peptide. Adopts an alpha helical conformation which can disrupt bacterial membranes. Strongly inhibits the formation of NO by neuronal nitric oxide synthase (nNOS) at micromolar concentrations. Acts by a non-competitive mechanism, probably by binding to calcium/calmodulin and as a consequence blocking calmodulin attachment to nNOS. Its function is as follows. Does not show antimicrobial activity. This chain is Caerin-1.6, found in Ranoidea chloris (Red-eyed tree frog).